The primary structure comprises 287 residues: Pyridoxal kinase PdxY (287 aa).

Residues Ser-10 and 45–46 (TQ) each bind substrate. ATP is bound by residues Asp-112, Ala-144, Glu-149, Lys-182, and 209-212 (RPLV). Asp-224 is a binding site for substrate.

This sequence belongs to the pyridoxine kinase family. PdxY subfamily. As to quaternary structure, homodimer. The cofactor is Mg(2+).

It catalyses the reaction pyridoxal + ATP = pyridoxal 5'-phosphate + ADP + H(+). It functions in the pathway cofactor metabolism; pyridoxal 5'-phosphate salvage; pyridoxal 5'-phosphate from pyridoxal: step 1/1. Its function is as follows. Pyridoxal kinase involved in the salvage pathway of pyridoxal 5'-phosphate (PLP). Catalyzes the phosphorylation of pyridoxal to PLP. This is Pyridoxal kinase PdxY from Escherichia coli O157:H7.